Here is a 412-residue protein sequence, read N- to C-terminus: Tyrosine--tRNA ligase (412 aa).

Tyr-31 provides a ligand contact to L-tyrosine. A 'HIGH' region motif is present at residues 36–45 (PTAPSLHIGH). Residues Tyr-162 and Gln-166 each coordinate L-tyrosine. The 'KMSKS' region signature appears at 222 to 226 (KIGKT). Lys-225 provides a ligand contact to ATP. The S4 RNA-binding domain maps to 345–412 (KRWLDVVVQL…KKKKQVIDLN (68 aa)).

Belongs to the class-I aminoacyl-tRNA synthetase family. TyrS type 1 subfamily. In terms of assembly, homodimer.

The protein localises to the cytoplasm. The enzyme catalyses tRNA(Tyr) + L-tyrosine + ATP = L-tyrosyl-tRNA(Tyr) + AMP + diphosphate + H(+). Functionally, catalyzes the attachment of tyrosine to tRNA(Tyr) in a two-step reaction: tyrosine is first activated by ATP to form Tyr-AMP and then transferred to the acceptor end of tRNA(Tyr). This chain is Tyrosine--tRNA ligase, found in Chlamydia muridarum (strain MoPn / Nigg).